We begin with the raw amino-acid sequence, 664 residues long: MDNKLEKMKELVEELNQYAYEYYVLDNPSISDKEYDLKYDELVILEKKTEVTLPYSPTQRVGDKILGEFSKYTHKGRLWSLDKAQNMEQLIEWHNRNLKVIEQYNSMSEDKLPELRYIVTKKFDGLTVNCTYDENGILIKSATRGTGIIGEDITAQIKTIKTVPLKIKNSHVIEVHGEAIMTKTAFEEYNKAAQVPLKNLRNGAAGALRNLDIKETARRNLSAFFYDVGYNEGPEFKSYREMMNFIKNMGLPQDKYIKECTNMEEVEKEIEYIESIRGELDYDIDGAVIVVDDIKTREILGYTIKFPKWAIAYKFEAKEITTKLLDVEWNVGRSGRVTPTALLEPVELGGVTVKRATLNNMDDIKRKNVKLGAKVLVRRSNDVIPEIMGVVEESLEESEEIQAPDRCPYCNSHLVQNGVHYYCENTLSCKPQMVKSIVHFASREAMNIAGFSEKTAEQLFEKLDIKSIADLYKIKKEELLTLEKFKDKKSQNLIDAIQNSKNCDLASFIYALGIPNVGKKTANDLVMKFKTLESIKNTTIEQLVEVPDVGEIVAKSIYDFFEDEKIISNIEELLNLGVKPYYEEERIDENPFMDKTIVVTGSLNNYSRGEIKDKLQSLGAKVSSSVSKNTDYVLVGEKPGSKYEKAIELGVKVINEEEFSNKIK.

NAD(+)-binding positions include 32 to 36 (DKEYD) and 80 to 81 (SL). Lys-122 serves as the catalytic N6-AMP-lysine intermediate. Positions 144, 178, and 314 each coordinate NAD(+). Residues Cys-407, Cys-410, Cys-423, and Cys-429 each coordinate Zn(2+). Residues 587 to 664 (IDENPFMDKT…NEEEFSNKIK (78 aa)) form the BRCT domain.

The protein belongs to the NAD-dependent DNA ligase family. LigA subfamily. Mg(2+) serves as cofactor. Requires Mn(2+) as cofactor.

The catalysed reaction is NAD(+) + (deoxyribonucleotide)n-3'-hydroxyl + 5'-phospho-(deoxyribonucleotide)m = (deoxyribonucleotide)n+m + AMP + beta-nicotinamide D-nucleotide.. In terms of biological role, DNA ligase that catalyzes the formation of phosphodiester linkages between 5'-phosphoryl and 3'-hydroxyl groups in double-stranded DNA using NAD as a coenzyme and as the energy source for the reaction. It is essential for DNA replication and repair of damaged DNA. In Clostridium botulinum (strain Okra / Type B1), this protein is DNA ligase.